An 87-amino-acid chain; its full sequence is Small ribosomal subunit protein uS15 (87 aa).

It belongs to the universal ribosomal protein uS15 family. Part of the 30S ribosomal subunit. Forms a bridge to the 50S subunit in the 70S ribosome, contacting the 23S rRNA.

In terms of biological role, one of the primary rRNA binding proteins, it binds directly to 16S rRNA where it helps nucleate assembly of the platform of the 30S subunit by binding and bridging several RNA helices of the 16S rRNA. Its function is as follows. Forms an intersubunit bridge (bridge B4) with the 23S rRNA of the 50S subunit in the ribosome. The protein is Small ribosomal subunit protein uS15 of Ruminiclostridium cellulolyticum (strain ATCC 35319 / DSM 5812 / JCM 6584 / H10) (Clostridium cellulolyticum).